The following is a 333-amino-acid chain: GTP 3',8-cyclase (333 aa).

A Radical SAM core domain is found at 7–221 (KFGRVHDYIR…FEACNEAGYE (215 aa)). Arg-16 contributes to the GTP binding site. [4Fe-4S] cluster-binding residues include Cys-23 and Cys-27. Residue Tyr-29 participates in S-adenosyl-L-methionine binding. Cys-30 contacts [4Fe-4S] cluster. Arg-66 lines the GTP pocket. Position 70 (Gly-70) interacts with S-adenosyl-L-methionine. A GTP-binding site is contributed by Thr-97. Ser-121 contacts S-adenosyl-L-methionine. Residue Lys-158 coordinates GTP. S-adenosyl-L-methionine is bound at residue Met-192. Positions 257 and 260 each coordinate [4Fe-4S] cluster. 262–264 (RLR) contacts GTP. Cys-274 lines the [4Fe-4S] cluster pocket.

It belongs to the radical SAM superfamily. MoaA family. In terms of assembly, monomer and homodimer. [4Fe-4S] cluster serves as cofactor.

The catalysed reaction is GTP + AH2 + S-adenosyl-L-methionine = (8S)-3',8-cyclo-7,8-dihydroguanosine 5'-triphosphate + 5'-deoxyadenosine + L-methionine + A + H(+). Its pathway is cofactor biosynthesis; molybdopterin biosynthesis. Catalyzes the cyclization of GTP to (8S)-3',8-cyclo-7,8-dihydroguanosine 5'-triphosphate. In Listeria monocytogenes serovar 1/2a (strain ATCC BAA-679 / EGD-e), this protein is GTP 3',8-cyclase.